Consider the following 96-residue polypeptide: ESAT-6-like protein EsxH (96 aa).

Zn(2+) contacts are provided by H14, H70, H76, and E77.

Belongs to the WXG100 family. ESAT-6 subfamily. In terms of assembly, forms a tight 1:1 complex with EsxG. When it is complexed to EsxG, interacts directly with host HGS/HRS.

It is found in the secreted. EsxH, in complex with EsxG, disrupts ESCRT function and impairs host phagosome maturation, thereby promoting intracellular bacterial growth. The complex acts by interacting, via EsxH, with the host hepatocyte growth factor-regulated tyrosine kinase substrate (HGS/HRS), a component of the ESCRT machinery. In Mycobacterium tuberculosis (strain ATCC 25618 / H37Rv), this protein is ESAT-6-like protein EsxH.